Reading from the N-terminus, the 249-residue chain is Enolase-phosphatase E1 (249 aa).

Residues Asp15 and Glu17 each contribute to the Mg(2+) site. Substrate-binding positions include 146–147 (SS) and Lys180. Asp205 serves as a coordination point for Mg(2+).

Belongs to the HAD-like hydrolase superfamily. MasA/MtnC family. In terms of assembly, monomer. The cofactor is Mg(2+).

It is found in the cytoplasm. The protein resides in the nucleus. It carries out the reaction 5-methylsulfanyl-2,3-dioxopentyl phosphate + H2O = 1,2-dihydroxy-5-(methylsulfanyl)pent-1-en-3-one + phosphate. It functions in the pathway amino-acid biosynthesis; L-methionine biosynthesis via salvage pathway; L-methionine from S-methyl-5-thio-alpha-D-ribose 1-phosphate: step 3/6. It participates in amino-acid biosynthesis; L-methionine biosynthesis via salvage pathway; L-methionine from S-methyl-5-thio-alpha-D-ribose 1-phosphate: step 4/6. Its function is as follows. Bifunctional enzyme that catalyzes the enolization of 2,3-diketo-5-methylthiopentyl-1-phosphate (DK-MTP-1-P) into the intermediate 2-hydroxy-3-keto-5-methylthiopentenyl-1-phosphate (HK-MTPenyl-1-P), which is then dephosphorylated to form the acireductone 1,2-dihydroxy-3-keto-5-methylthiopentene (DHK-MTPene). The polypeptide is Enolase-phosphatase E1 (Caenorhabditis briggsae).